The sequence spans 274 residues: D-aminoacyl-tRNA deacylase (274 aa).

The protein belongs to the DtdA deacylase family. As to quaternary structure, monomer. The cofactor is Zn(2+).

It carries out the reaction a D-aminoacyl-tRNA + H2O = a tRNA + a D-alpha-amino acid + H(+). The catalysed reaction is glycyl-tRNA(Ala) + H2O = tRNA(Ala) + glycine + H(+). Its function is as follows. D-aminoacyl-tRNA deacylase with broad substrate specificity. By recycling D-aminoacyl-tRNA to D-amino acids and free tRNA molecules, this enzyme counteracts the toxicity associated with the formation of D-aminoacyl-tRNA entities in vivo. The chain is D-aminoacyl-tRNA deacylase from Pyrococcus horikoshii (strain ATCC 700860 / DSM 12428 / JCM 9974 / NBRC 100139 / OT-3).